Consider the following 258-residue polypeptide: Imidazole glycerol phosphate synthase subunit HisF (258 aa).

Catalysis depends on residues aspartate 11 and aspartate 130.

It belongs to the HisA/HisF family. As to quaternary structure, heterodimer of HisH and HisF.

The protein resides in the cytoplasm. The enzyme catalyses 5-[(5-phospho-1-deoxy-D-ribulos-1-ylimino)methylamino]-1-(5-phospho-beta-D-ribosyl)imidazole-4-carboxamide + L-glutamine = D-erythro-1-(imidazol-4-yl)glycerol 3-phosphate + 5-amino-1-(5-phospho-beta-D-ribosyl)imidazole-4-carboxamide + L-glutamate + H(+). It participates in amino-acid biosynthesis; L-histidine biosynthesis; L-histidine from 5-phospho-alpha-D-ribose 1-diphosphate: step 5/9. IGPS catalyzes the conversion of PRFAR and glutamine to IGP, AICAR and glutamate. The HisF subunit catalyzes the cyclization activity that produces IGP and AICAR from PRFAR using the ammonia provided by the HisH subunit. The sequence is that of Imidazole glycerol phosphate synthase subunit HisF from Shigella flexneri serotype 5b (strain 8401).